The sequence spans 246 residues: UDP-N-acetyl-D-mannosaminuronic acid transferase (246 aa).

It belongs to the glycosyltransferase 26 family.

The catalysed reaction is UDP-N-acetyl-alpha-D-mannosaminouronate + N-acetyl-alpha-D-glucosaminyl-di-trans,octa-cis-undecaprenyl diphosphate = beta-D-ManNAcA-(1-&gt;4)-alpha-D-GlcNAc-di-trans,octa-cis-undecaprenyl diphosphate + UDP + H(+). The protein operates within bacterial outer membrane biogenesis; enterobacterial common antigen biosynthesis. Catalyzes the synthesis of Und-PP-GlcNAc-ManNAcA (Lipid II), the second lipid-linked intermediate involved in enterobacterial common antigen (ECA) synthesis. The sequence is that of UDP-N-acetyl-D-mannosaminuronic acid transferase from Shigella flexneri.